Consider the following 108-residue polypeptide: Mitochondrial import inner membrane translocase subunit tim-13 (108 aa).

The Twin CX3C motif motif lies at 45–68 (CTNKCITAPGSSLASGEKQCLQRC). Cystine bridges form between C45-C68 and C49-C64. The tract at residues 89–108 (EEMASSGGMGGGFGQGPSFS) is disordered. The segment covering 95–108 (GGMGGGFGQGPSFS) has biased composition (gly residues).

It belongs to the small Tim family. In terms of assembly, heterohexamer; composed of 3 copies of tim-8/ddp-1 and 3 copies of tin-13/tim-13, named soluble 70 kDa complex. Associates with the TIM22 complex, whose core is composed of tim-22.

The protein resides in the mitochondrion inner membrane. Functionally, mitochondrial intermembrane chaperone that participates in the import and insertion of some multi-pass transmembrane proteins into the mitochondrial inner membrane. Also required for the transfer of beta-barrel precursors from the TOM complex to the sorting and assembly machinery (SAM complex) of the outer membrane. Acts as a chaperone-like protein that protects the hydrophobic precursors from aggregation and guide them through the mitochondrial intermembrane space. The tim-8-tim-13 complex mediates the import of some proteins while the predominant tim-9/tin-9.1-tim-10/tin-10 70 kDa complex mediates the import of much more proteins. The protein is Mitochondrial import inner membrane translocase subunit tim-13 (tin-13) of Caenorhabditis elegans.